The chain runs to 216 residues: MKTLNLFPCEERPSLLEFESLVRRQGYACIAGIDEAGRGPLAGPVVAAAVILPNGVELPGVNDSKKLSPVKRNELFDLIMASASAVGVGSSDAGLIDEINILQATLAAMKQAVSMLCIPPDYLLIDGISKVPLSIPQKTIKKGDSLSLSIAAASIIAKVSRDRLMMDYETRFPGYGFAAHKGYGCVSHMAAIAELGPCAIHRKTFRGVKEYVRSEE.

One can recognise an RNase H type-2 domain in the interval 28 to 216; the sequence is ACIAGIDEAG…GVKEYVRSEE (189 aa). The a divalent metal cation site is built by Asp34, Glu35, and Asp126.

This sequence belongs to the RNase HII family. It depends on Mn(2+) as a cofactor. The cofactor is Mg(2+).

Its subcellular location is the cytoplasm. It carries out the reaction Endonucleolytic cleavage to 5'-phosphomonoester.. Its function is as follows. Endonuclease that specifically degrades the RNA of RNA-DNA hybrids. The chain is Ribonuclease HII from Geotalea uraniireducens (strain Rf4) (Geobacter uraniireducens).